Here is a 308-residue protein sequence, read N- to C-terminus: Methionyl-tRNA formyltransferase (308 aa).

110–113 (SLLP) serves as a coordination point for (6S)-5,6,7,8-tetrahydrofolate.

It belongs to the Fmt family.

The catalysed reaction is L-methionyl-tRNA(fMet) + (6R)-10-formyltetrahydrofolate = N-formyl-L-methionyl-tRNA(fMet) + (6S)-5,6,7,8-tetrahydrofolate + H(+). Its function is as follows. Attaches a formyl group to the free amino group of methionyl-tRNA(fMet). The formyl group appears to play a dual role in the initiator identity of N-formylmethionyl-tRNA by promoting its recognition by IF2 and preventing the misappropriation of this tRNA by the elongation apparatus. In Neisseria gonorrhoeae (strain NCCP11945), this protein is Methionyl-tRNA formyltransferase.